Reading from the N-terminus, the 104-residue chain is Cytochrome c6 (104 aa).

The signal sequence occupies residues 1–20; that stretch reads MKSLLTFILTTIFCIQQVWA. Residues Cys34, Cys37, His38, and Met78 each coordinate heme c.

This sequence belongs to the cytochrome c family. PetJ subfamily. As to quaternary structure, monomer. In terms of processing, binds 1 heme c group covalently per subunit.

It localises to the plastid. Its subcellular location is the chloroplast thylakoid lumen. Its function is as follows. Functions as an electron carrier between membrane-bound cytochrome b6-f and photosystem I in oxygenic photosynthesis. This is Cytochrome c6 from Cyanidioschyzon merolae (strain NIES-3377 / 10D) (Unicellular red alga).